A 35-amino-acid polypeptide reads, in one-letter code: MSDIN-like toxin proprotein 6 (35 aa).

Positions 1–10 are excised as a propeptide; sequence MSDINGTRLP. The segment at residues 11–20 is a cross-link (cyclopeptide (Ile-Pro)); the sequence is IPGLIPLGIP. Positions 21–35 are excised as a propeptide; the sequence is CVSDDVNPTLTRGER.

This sequence belongs to the MSDIN fungal toxin family. In terms of processing, processed by the macrocyclase-peptidase enzyme POPB to yield a toxic cyclic decapeptide. POPB first removes 10 residues from the N-terminus. Conformational trapping of the remaining peptide forces the enzyme to release this intermediate rather than proceed to macrocyclization. The enzyme rebinds the remaining peptide in a different conformation and catalyzes macrocyclization of the N-terminal 10 residues.

In terms of biological role, probable toxin that belongs to the MSDIN-like toxin family responsible for a large number of food poisoning cases and deaths. The sequence is that of MSDIN-like toxin proprotein 6 from Amanita bisporigera (Destroying angel).